Here is a 349-residue protein sequence, read N- to C-terminus: Transcription repressor OFP5 (349 aa).

Disordered regions lie at residues 1-20, 29-94, and 143-183; these read MMRW…GLSR, KLSG…KESN, and KQRC…GYSR. Low complexity predominate over residues 10–20; the sequence is VSSSSSSGLSR. The span at 37 to 48 shows a compositional bias: basic and acidic residues; that stretch reads KPAKEKKQDEKA. Over residues 49-62 the composition is skewed to polar residues; the sequence is SQNISVKTSLSSTT. Basic and acidic residues-rich tracts occupy residues 63 to 94 and 143 to 167; these read RRSD…KESN and KQRC…DAGV. Residues 286 to 345 enclose the OVATE domain; that stretch reads VVKCSSDPQKDFRDSMIEMIMENGINHPEELKELLVCYLRLNTDEYHDMIISVFQQVHND.

Interacts with BLH1, BLH2, BLH3, BLH4, BLH6 and BLH10. As to expression, expressed in roots, rosette and cauline leaves, and flower buds.

Its subcellular location is the nucleus. Transcriptional repressor that regulates multiple aspects of plant growth and development through the regulation of BEL1-LIKE (BLH) and KNOX TALE (KNAT) homeodomain transcription factors. Required for embryo development. The chain is Transcription repressor OFP5 (OFP5) from Arabidopsis thaliana (Mouse-ear cress).